Reading from the N-terminus, the 371-residue chain is Macronuclear solute carrier homolog CR-MSC (371 aa).

3 Solcar repeats span residues 16 to 111, 120 to 208, and 215 to 304; these read RMNY…FYDK, ARPD…CKEN, and PHWI…LSQF. The next 6 membrane-spanning stretches (helical) occupy residues 22 to 42, 89 to 109, 126 to 146, 184 to 204, 221 to 241, and 281 to 301; these read FAAANVIALITHAATQPLDMV, TFFFRTVCYTTARVTAFGYFY, VAAGVLGGFIAGVVTNPIDIV, AGANGFKLAAICSSMTNIYDW, LWGTAVAVAIGTVVSMPFDMI, and FGSFYAGGEAYFLRLFLICYL.

The protein belongs to the mitochondrial carrier (TC 2.A.29) family.

The protein localises to the membrane. The chain is Macronuclear solute carrier homolog CR-MSC from Oxytricha fallax.